Reading from the N-terminus, the 241-residue chain is Transcription factor HEC1 (241 aa).

Residues 128-177 (ISKDPQSVAARHRRERISERIRILQRLVPGGTKMDTASMLDEAIHYVKFL) form the bHLH domain.

In terms of assembly, homodimer. Interacts with SPT. Interacts with BZIP30. In terms of tissue distribution, flowers, especially in gynoecium.

The protein localises to the nucleus. Its function is as follows. Required for the female reproductive tract development and fertility. This Arabidopsis thaliana (Mouse-ear cress) protein is Transcription factor HEC1 (HEC1).